Reading from the N-terminus, the 400-residue chain is CinA-like protein (400 aa).

Belongs to the CinA family.

The sequence is that of CinA-like protein from Escherichia coli (strain SE11).